We begin with the raw amino-acid sequence, 318 residues long: NADH-ubiquinone oxidoreductase chain 1 (318 aa).

The next 9 helical transmembrane spans lie at 2–22, 37–57, 69–89, 100–120, 136–156, 171–191, 206–226, 253–273, and 294–314; these read FLMN…FLTL, PNIV…KLFI, LMFT…WIPM, LGVL…LWSG, VAQT…TMMM, HMWL…STLA, ELVS…FFMA, ELFT…FLWI, and LPLT…SAGI.

This sequence belongs to the complex I subunit 1 family.

The protein localises to the mitochondrion inner membrane. The catalysed reaction is a ubiquinone + NADH + 5 H(+)(in) = a ubiquinol + NAD(+) + 4 H(+)(out). Functionally, core subunit of the mitochondrial membrane respiratory chain NADH dehydrogenase (Complex I) that is believed to belong to the minimal assembly required for catalysis. Complex I functions in the transfer of electrons from NADH to the respiratory chain. The immediate electron acceptor for the enzyme is believed to be ubiquinone. The polypeptide is NADH-ubiquinone oxidoreductase chain 1 (MT-ND1) (Tolypeutes matacus (Southern three-banded armadillo)).